The chain runs to 445 residues: Cryptochrome DASH (445 aa).

The 134-residue stretch at 4–137 (KIGLYWFTFD…VIVQHSVRSL (134 aa)) folds into the Photolyase/cryptochrome alpha/beta domain.

Belongs to the DNA photolyase class-1 family. The cofactor is FAD. It depends on (6R)-5,10-methylene-5,6,7,8-tetrahydrofolate as a cofactor.

Its function is as follows. May have a photoreceptor function. Binds DNA; probably functions as a transcriptional repressor. In Vibrio parahaemolyticus serotype O3:K6 (strain RIMD 2210633), this protein is Cryptochrome DASH (cry).